Reading from the N-terminus, the 163-residue chain is Crossover junction endodeoxyribonuclease RuvC (163 aa).

Catalysis depends on residues D4, E65, and D138. Residues D4, E65, and D138 each coordinate Mg(2+).

It belongs to the RuvC family. Homodimer which binds Holliday junction (HJ) DNA. The HJ becomes 2-fold symmetrical on binding to RuvC with unstacked arms; it has a different conformation from HJ DNA in complex with RuvA. In the full resolvosome a probable DNA-RuvA(4)-RuvB(12)-RuvC(2) complex forms which resolves the HJ. Mg(2+) is required as a cofactor.

Its subcellular location is the cytoplasm. It catalyses the reaction Endonucleolytic cleavage at a junction such as a reciprocal single-stranded crossover between two homologous DNA duplexes (Holliday junction).. In terms of biological role, the RuvA-RuvB-RuvC complex processes Holliday junction (HJ) DNA during genetic recombination and DNA repair. Endonuclease that resolves HJ intermediates. Cleaves cruciform DNA by making single-stranded nicks across the HJ at symmetrical positions within the homologous arms, yielding a 5'-phosphate and a 3'-hydroxyl group; requires a central core of homology in the junction. The consensus cleavage sequence is 5'-(A/T)TT(C/G)-3'. Cleavage occurs on the 3'-side of the TT dinucleotide at the point of strand exchange. HJ branch migration catalyzed by RuvA-RuvB allows RuvC to scan DNA until it finds its consensus sequence, where it cleaves and resolves the cruciform DNA. The polypeptide is Crossover junction endodeoxyribonuclease RuvC (Corynebacterium jeikeium (strain K411)).